A 64-amino-acid polypeptide reads, in one-letter code: Putative isoleucine--tRNA ligase (64 aa).

The protein belongs to the class-I aminoacyl-tRNA synthetase family. In terms of assembly, member of a complex that includes annexin.

It catalyses the reaction tRNA(Ile) + L-isoleucine + ATP = L-isoleucyl-tRNA(Ile) + AMP + diphosphate. In Physarum polycephalum (Slime mold), this protein is Putative isoleucine--tRNA ligase.